A 781-amino-acid chain; its full sequence is Death domain-containing protein 1 (781 aa).

ZU5 domains are found at residues 167 to 301 (IMEK…VSCL) and 302 to 483 (KKES…VLHL). The 86-residue stretch at 679–764 (DNLLHWLAEE…DLAEELKFKW (86 aa)) folds into the Death domain.

The sequence is that of Death domain-containing protein 1 (DTHD1) from Homo sapiens (Human).